A 400-amino-acid polypeptide reads, in one-letter code: Elongation factor Tu (400 aa).

The tr-type G domain maps to 10–208; the sequence is KPHLNVGTIG…TMDEYFPEPQ (199 aa). Residues 19–26 form a G1 region; it reads GHIDHGKT. 19-26 lines the GTP pocket; that stretch reads GHIDHGKT. Residue Thr26 participates in Mg(2+) binding. Residues 60–64 are G2; it reads GITIN. The G3 stretch occupies residues 81 to 84; sequence DCPG. GTP-binding positions include 81 to 85 and 136 to 139; these read DCPGH and NKTD. Residues 136 to 139 are G4; that stretch reads NKTD. The segment at 174–176 is G5; the sequence is SAL.

It belongs to the TRAFAC class translation factor GTPase superfamily. Classic translation factor GTPase family. EF-Tu/EF-1A subfamily. As to quaternary structure, monomer.

It is found in the cytoplasm. It carries out the reaction GTP + H2O = GDP + phosphate + H(+). In terms of biological role, GTP hydrolase that promotes the GTP-dependent binding of aminoacyl-tRNA to the A-site of ribosomes during protein biosynthesis. This is Elongation factor Tu from Thermosipho melanesiensis (strain DSM 12029 / CIP 104789 / BI429).